The following is a 175-amino-acid chain: Shikimate kinase (175 aa).

14-19 (GAGKST) contributes to the ATP binding site. Position 18 (serine 18) interacts with Mg(2+). Positions 36, 60, and 82 each coordinate substrate. Arginine 120 is an ATP binding site. Arginine 140 contributes to the substrate binding site. An ATP-binding site is contributed by glutamine 157.

It belongs to the shikimate kinase family. In terms of assembly, monomer. Mg(2+) serves as cofactor.

The protein localises to the cytoplasm. The catalysed reaction is shikimate + ATP = 3-phosphoshikimate + ADP + H(+). It participates in metabolic intermediate biosynthesis; chorismate biosynthesis; chorismate from D-erythrose 4-phosphate and phosphoenolpyruvate: step 5/7. Functionally, catalyzes the specific phosphorylation of the 3-hydroxyl group of shikimic acid using ATP as a cosubstrate. This chain is Shikimate kinase, found in Histophilus somni (strain 2336) (Haemophilus somnus).